Here is a 439-residue protein sequence, read N- to C-terminus: Guanine deaminase (439 aa).

Residues His82 and His84 each contribute to the Zn(2+) site. Residues 84 to 87 (HYPQ), 209 to 210 (RF), 237 to 240 (HLCE), and Asp327 contribute to the substrate site. Zn(2+) contacts are provided by His237 and Asp327.

This sequence belongs to the metallo-dependent hydrolases superfamily. ATZ/TRZ family. Zn(2+) is required as a cofactor.

The enzyme catalyses guanine + H2O + H(+) = xanthine + NH4(+). It participates in purine metabolism; guanine degradation; xanthine from guanine: step 1/1. Its function is as follows. Catalyzes the hydrolytic deamination of guanine, producing xanthine and ammonia. The chain is Guanine deaminase (guaD) from Escherichia coli (strain K12).